The following is an 83-amino-acid chain: Small ribosomal subunit protein bS16 (83 aa).

It belongs to the bacterial ribosomal protein bS16 family.

This Verminephrobacter eiseniae (strain EF01-2) protein is Small ribosomal subunit protein bS16.